Reading from the N-terminus, the 91-residue chain is Tachykinin-like peptide (91 aa).

The signal sequence occupies residues 1–19; sequence MKILVAFAVIMLVSAQVLA. The propeptide occupies 20 to 51; the sequence is AEIGLNDEPEWYSDQIQEDLPVFENFLQRIAR. Position 62 is a methionine amide (M62). The segment at 64 to 91 is disordered; that stretch reads KRNNGFGQMSRKRSAERNTIHNYERRRK. Residues 66–91 constitute a propeptide that is removed on maturation; it reads NNGFGQMSRKRSAERNTIHNYERRRK. The segment covering 76-91 has biased composition (basic and acidic residues); sequence RSAERNTIHNYERRRK.

In terms of tissue distribution, expressed by the skin glands.

It is found in the secreted. Tachykinins are active peptides which excite neurons, evoke behavioral responses, are potent vasodilators and secretagogues, and contract (directly or indirectly) many smooth muscles. In vitro, induces contraction of guinea pig ileum smooth muscle in a dose-dependent manner. This is Tachykinin-like peptide from Theloderma corticale (Kwangsi warty tree frog).